A 266-amino-acid polypeptide reads, in one-letter code: Blue copper protein (266 aa).

An N-terminal signal peptide occupies residues 1 to 24 (MAYSKILFCFMIGFVGFLPAITMA). Phytocyanin domains are found at residues 25 to 56 (TQYLVGDDRGWTLDFDYQTWAKNKTFKVGDTL), 57 to 102 (APPP…TVED), and 116 to 216 (TEYW…TVEG). Asn-47 is a glycosylation site (N-linked (GlcNAc...) asparagine). His-156 lines the Cu cation pocket. Asn-162 is a glycosylation site (N-linked (GlcNAc...) asparagine). An intrachain disulfide couples Cys-169 to Cys-203. Cu cation-binding residues include Cys-197, His-202, and Gln-208. The chain crosses the membrane as a helical span at residues 245–265 (ITSPYKMFVGGAVSIWTILTL).

The protein resides in the membrane. The polypeptide is Blue copper protein (Petunia hybrida (Petunia)).